Reading from the N-terminus, the 163-residue chain is MSLGLLKFQAVGEEDEEDEEGESLDSVKALTAKLQLQTRRPSYLEWTAQVQSQAWRRAQAKPGPGGPGDICGFDSMDSALEWLRRELREMQAQDRQLAGQLLRLRAQLHRLKMDQACHLHQELLDEAELELELEPGAGLALAPLLRHLGLTRMNISARRFTLC.

Residues 73–132 are a coiled coil; the sequence is FDSMDSALEWLRRELREMQAQDRQLAGQLLRLRAQLHRLKMDQACHLHQELLDEAELELE.

It belongs to the FAM167 (SEC) family.

This chain is Protein FAM167B (FAM167B), found in Homo sapiens (Human).